The chain runs to 191 residues: Inosine triphosphate pyrophosphatase (191 aa).

15 to 20 (TGNTNK) provides a ligand contact to ITP. Glutamate 43 contacts Mg(2+). Residues lysine 55, 71–72 (DT), lysine 88, 147–150 (FGWD), lysine 168, and 173–174 (HR) each bind ITP.

This sequence belongs to the HAM1 NTPase family. As to quaternary structure, homodimer. Requires Mg(2+) as cofactor. It depends on Mn(2+) as a cofactor.

It localises to the cytoplasm. The protein localises to the nucleus. The enzyme catalyses ITP + H2O = IMP + diphosphate + H(+). It catalyses the reaction dITP + H2O = dIMP + diphosphate + H(+). The catalysed reaction is XTP + H2O = XMP + diphosphate + H(+). Pyrophosphatase that hydrolyzes non-canonical purine nucleotides such as inosine triphosphate (ITP), deoxyinosine triphosphate (dITP) or xanthosine 5'-triphosphate (XTP) to their respective monophosphate derivatives. The enzyme does not distinguish between the deoxy- and ribose forms. Probably excludes non-canonical purines from RNA and DNA precursor pools, thus preventing their incorporation into RNA and DNA and avoiding chromosomal lesions. The chain is Inosine triphosphate pyrophosphatase from Chaetomium globosum (strain ATCC 6205 / CBS 148.51 / DSM 1962 / NBRC 6347 / NRRL 1970) (Soil fungus).